Reading from the N-terminus, the 466-residue chain is Neuraminidase (466 aa).

Residues 1–11 (MLPSTIQTLTL) lie on the Intravirion side of the membrane. The chain crosses the membrane as a helical span at residues 12–34 (FLTSGGVLLSLYVSASLSYLLYS). An involved in apical transport and lipid raft association region spans residues 13 to 35 (LTSGGVLLSLYVSASLSYLLYSD). The Virion surface segment spans residues 35–466 (DILLKFSPTK…DTVTGVDMAL (432 aa)). Residues 38 to 86 (LKFSPTKRTAPTMSLECVNVSNAQAVNHSATKEMTFLLPEPEWTYPRLS) form a hypervariable stalk region region. 2 N-linked (GlcNAc...) asparagine; by host glycosylation sites follow: Asn-56 and Asn-64. Cystine bridges form between Cys-87–Cys-420, Cys-122–Cys-127, Cys-182–Cys-229, Cys-231–Cys-236, Cys-277–Cys-291, Cys-279–Cys-289, Cys-318–Cys-337, and Cys-424–Cys-447. Positions 89-466 (GSTFQKALLI…DTVTGVDMAL (378 aa)) are head of neuraminidase. Arg-116 lines the substrate pocket. The N-linked (GlcNAc...) asparagine; by host glycan is linked to Asn-144. Asp-149 acts as the Proton donor/acceptor in catalysis. Position 150 (Arg-150) interacts with substrate. A substrate-binding site is contributed by 275–276 (EE). N-linked (GlcNAc...) asparagine; by host glycosylation occurs at Asn-284. A substrate-binding site is contributed by Arg-292. Asp-293 and Asp-324 together coordinate Ca(2+). Arg-374 provides a ligand contact to substrate. The active-site Nucleophile is Tyr-409.

The protein belongs to the glycosyl hydrolase 34 family. As to quaternary structure, homotetramer. It depends on Ca(2+) as a cofactor. In terms of processing, N-glycosylated.

Its subcellular location is the virion membrane. The protein localises to the host apical cell membrane. The enzyme catalyses Hydrolysis of alpha-(2-&gt;3)-, alpha-(2-&gt;6)-, alpha-(2-&gt;8)- glycosidic linkages of terminal sialic acid residues in oligosaccharides, glycoproteins, glycolipids, colominic acid and synthetic substrates.. Inhibited by the neuraminidase inhibitors zanamivir (Relenza) and oseltamivir (Tamiflu). These drugs interfere with the release of progeny virus from infected cells and are effective against all influenza strains. Resistance to neuraminidase inhibitors is quite rare. Its function is as follows. Catalyzes the removal of terminal sialic acid residues from viral and cellular glycoconjugates. Cleaves off the terminal sialic acids on the glycosylated HA during virus budding to facilitate virus release. Additionally helps virus spread through the circulation by further removing sialic acids from the cell surface. These cleavages prevent self-aggregation and ensure the efficient spread of the progeny virus from cell to cell. Otherwise, infection would be limited to one round of replication. Described as a receptor-destroying enzyme because it cleaves a terminal sialic acid from the cellular receptors. May facilitate viral invasion of the upper airways by cleaving the sialic acid moieties on the mucin of the airway epithelial cells. Likely to plays a role in the budding process through its association with lipid rafts during intracellular transport. May additionally display a raft-association independent effect on budding. Plays a role in the determination of host range restriction on replication and virulence. Sialidase activity in late endosome/lysosome traffic seems to enhance virus replication. The protein is Neuraminidase of Influenza B virus (strain B/Maryland/1959).